We begin with the raw amino-acid sequence, 249 residues long: DNA repair protein RecO (249 aa).

It belongs to the RecO family.

Its function is as follows. Involved in DNA repair and RecF pathway recombination. In Lactobacillus delbrueckii subsp. bulgaricus (strain ATCC 11842 / DSM 20081 / BCRC 10696 / JCM 1002 / NBRC 13953 / NCIMB 11778 / NCTC 12712 / WDCM 00102 / Lb 14), this protein is DNA repair protein RecO.